We begin with the raw amino-acid sequence, 749 residues long: Transcription factor RFX3 (749 aa).

Residues 183–258 (HLQWLLDNYE…YHYYGIRVKP (76 aa)) constitute a DNA-binding region (RFX-type winged-helix). The interval 663–699 (VSPGNLDKDEGSEVESETDEDLDDSSEPRAKREKTEL) is disordered. Residues 674-687 (SEVESETDEDLDDS) are compositionally biased toward acidic residues. A compositionally biased stretch (basic and acidic residues) spans 688 to 698 (SEPRAKREKTE).

This sequence belongs to the RFX family. Heterodimer; heterodimerizes with RFX1 and RFX2, and RFX6. In terms of tissue distribution, expressed in ciliated cells of the node and in the ciliated ependymal cells of the subcommissural organ (SCO), choroid plexuses (CP) and ventricular walls during embryonic and postnatal development. Expressed in developing and mature pancreatic endocrine cells during embryogenesis and in adults (at protein level).

The protein resides in the nucleus. Transcription factor required for ciliogenesis and islet cell differentiation during endocrine pancreas development. Essential for the differentiation of nodal monocilia and left-right asymmetry specification during embryogenesis. Required for the biogenesis of motile cilia by governing growth and beating efficiency of motile cells. Also required for ciliated ependymal cell differentiation. Together with RFX6, participates in the differentiation of 4 of the 5 islet cell types during endocrine pancreas development, with the exception of pancreatic PP (polypeptide-producing) cells. Regulates transcription by forming a heterodimer with another RFX protein and binding to the X-box in the promoter of target genes. Regulates the expression of genes involved in ciliary assembly (DYNC2LI1, FOXJ1 and BBS4) and genes involved in ciliary motility (DNAH11, DNAH9 and DNAH5). Represses transcription of MAP1A in non-neuronal cells but not in neuronal cells. This is Transcription factor RFX3 (Rfx3) from Mus musculus (Mouse).